The sequence spans 93 residues: SH3 domain-binding glutamic acid-rich-like protein 3 (93 aa).

At S2 the chain carries N-acetylserine. S2 carries an O-linked (GalNAc...) serine glycan. The region spanning 2 to 93 (SGRRVYSTSV…NTLQEFLKLA (92 aa)) is the Glutaredoxin domain. O-linked (GalNAc...) threonine glycosylation is found at T9 and T12.

The protein belongs to the SH3BGR family. In terms of assembly, homodimer. Interacts with MYO1C (via its IQ motifs); the interaction is dependent on calcium and takes place at membrane ruffles. In terms of processing, may be glycosylated.

Its subcellular location is the cytoplasm. It localises to the cytosol. The protein resides in the cell projection. The protein localises to the ruffle membrane. It is found in the nucleus. Could act as a modulator of glutaredoxin biological activity. May play a role in cytoskeleton organization. The protein is SH3 domain-binding glutamic acid-rich-like protein 3 (SH3BGRL3) of Pongo abelii (Sumatran orangutan).